The primary structure comprises 605 residues: DNA primase (605 aa).

Residues 37-61 (CPFHADKNPSMHINPIKGFYHCFAC) form a CHC2-type zinc finger. Residues 248 to 329 (KEIIVCEGYM…DGKVAILQGG (82 aa)) enclose the Toprim domain. Mg(2+) is bound by residues Glu254, Asp298, and Asp300.

The protein belongs to the DnaG primase family. In terms of assembly, monomer. Interacts with DnaB. Zn(2+) serves as cofactor. Mg(2+) is required as a cofactor.

It catalyses the reaction ssDNA + n NTP = ssDNA/pppN(pN)n-1 hybrid + (n-1) diphosphate.. In terms of biological role, RNA polymerase that catalyzes the synthesis of short RNA molecules used as primers for DNA polymerase during DNA replication. This is DNA primase from Campylobacter jejuni subsp. jejuni serotype O:2 (strain ATCC 700819 / NCTC 11168).